A 259-amino-acid polypeptide reads, in one-letter code: Thiazole synthase (259 aa).

Lysine 95 (schiff-base intermediate with DXP) is an active-site residue. Residues glycine 156, 182 to 183, and 204 to 205 each bind 1-deoxy-D-xylulose 5-phosphate; these read AG and NT.

This sequence belongs to the ThiG family. In terms of assembly, homotetramer. Forms heterodimers with either ThiH or ThiS.

The protein localises to the cytoplasm. The enzyme catalyses [ThiS sulfur-carrier protein]-C-terminal-Gly-aminoethanethioate + 2-iminoacetate + 1-deoxy-D-xylulose 5-phosphate = [ThiS sulfur-carrier protein]-C-terminal Gly-Gly + 2-[(2R,5Z)-2-carboxy-4-methylthiazol-5(2H)-ylidene]ethyl phosphate + 2 H2O + H(+). It functions in the pathway cofactor biosynthesis; thiamine diphosphate biosynthesis. In terms of biological role, catalyzes the rearrangement of 1-deoxy-D-xylulose 5-phosphate (DXP) to produce the thiazole phosphate moiety of thiamine. Sulfur is provided by the thiocarboxylate moiety of the carrier protein ThiS. In vitro, sulfur can be provided by H(2)S. This chain is Thiazole synthase, found in Proteus mirabilis (strain HI4320).